Consider the following 2512-residue polypeptide: MHRVRLSRSQRNLYNGVRQDNNPALYLIGKSYRFRRLELARFLAALHATVLDNPVQLCVLENSGADYPDLVPRLRFGDIVRVGSADEHLQSTWCSGILGKPLVRHTVHTDPNGYVTGLDVHTHHILLDGGATGTIEADLARYLTTDPAGETPSVGAGLAKLREAHRRETAKVEESRGRLSAVVQRELADEAYHGGHGHSVSDAPGTAAKGVLHESATICGNAFDAILTLSEAQRVPLNVLVAAAAVAVDASLRQNTETLLVHTVDNRFGDSDLNVATCLVNSVAQTVRFPPFASVSDVVRTLDRGYVKAVRRRWLREEHYRRMYLAINRTSHVEALTLNFIREPCAPGLRPFLSEVPIATDIGPVEGMTVASVLDEEQRTLNLAIWNRADLPACKTHPKVAERIAAALESMAAMWDRPIAMIVNDWFGIGPDGTRCQGDWPARQPSTPAWFLDSARGVHQFLGRRRFVYPWVAWLVQRGAAPGDVLVFTDDDTDKTIDLLIACHLAGCGYSVCDTADEISVRTNAITEHGDGILVTVVDVAATQLAVVGHDELRKVVDERVTQVTHDALLATKTAYIMPTSGTTGQPKLVRISHGSLAVFCDAISRAYGWGAHDTVLQCAPLTSDISVEEIFGGAACGARLVRSAAMKTGDLAALVDDLVARETTIVDLPTAVWQLLCADGDAIDAIGRSRLRQIVIGGEAIRCSAVDKWLESAASQGISLLSSYGPTEATVVATFLPIVCDQTTMDGALLRLGRPILPNTVFLAFGEVVIVGDLVADGYLGIDGDGFGTVTAADGSRRRAFATGDRVTVDAEGFPVFSGRKDAVVKISGKRVDIAEVTRRIAEDPAVSDVAVELHSGSLGVWFKSQRTREGEQDAAAATRIRLVLVSLGVSSFFVVGVPNIPRKPNGKIDSDNLPRLPQWSAAGLNTAETGQRAAGLSQIWSRQLGRAIGPDSSLLGEGIGSLDLIRILPETRRYLGWRLSLLDLIGADTAANLADYAPTPDAPTGEDRFRPLVAAQRPAAIPLSFAQRRLWFLDQLQRPAPVYNMAVALRLRGYLDTEALGAAVADVVGRHESLRTVFPAVDGVPRQLVIEARRADLGCDIVDATAWPADRLQRAIEEAARHSFDLATEIPLRTWLFRIADDEHVLVAVAHHIAADGWSVAPLTADLSAAYASRCAGRAPDWAPLPVQYVDYTLWQREILGDLDDSDSPIAAQLAYWENALAGMPERLRLPTARPYPPVADQRGASLVVDWPASVQQQVRRIARQHNATSFMVVAAGLAVLLSKLSGSPDVAVGFPIAGRSDPALDNLVGFFVNTLVLRVNLAGDPSFAELLGQVRARSLAAYENQDVPFEVLVDRLKPTRALTHHPLIQVMLAWQDNPVGQLNLGDLQATPMPIDTRTARMDLVFSLAERFSEGSEPAGIGGAVEYRTDVFEAQAIDVLIERLRKVLVAVAAAPERTVSSIDALDGTERARLDEWGNRAVLTAPAPTPVSIPQMLAAQVARIPEAEAVCCGDASMTYRELDEASNRLAHRLAGCGAGPGECVALLFERCAPAVVAMVAVLKTGAAYLPIDPANPPPRVAFMLGDAVPVAAVTTAGLRSRLAGHDLPIIDVVDALAAYPGTPPPMPAAVNLAYILYTSGTTGEPKGVGITHRNVTRLFASLPARLSAAQVWSQCHSYGFDASAWEIWGALLGGGRLVIVPESVAASPNDFHGLLVAEHVSVLTQTPAAVAMLPTQGLESVALVVAGEACPAALVDRWAPGRVMLNAYGPTETTICAAISAPLRPGSGMPPIGVPVSGAALFVLDSWLRPVPAGVAGELYIAGAGVGVGYWRRAGLTASRFVACPFGGSGARMYRTGDLVCWRADGQLEFLGRTDDQVKIRGYRIELGEVATALAELAGVGQAVVIAREDRPGDKRLVGYATEIAPGAVDPAGLRAQLAQRLPGYLVPAAVVVIDALPLTVNGKLDHRALPAPEYGDTNGYRAPAGPVEKTVAGIFARVLGLERVGVDDSFFELGGDSLAAMRVIAAINTTLNADLPVRALLHASSTRGLSQLLGRDARPTSDPRLVSVHGDNPTEVHASDLTLDRFIDADTLATAVNLPGPSPELRTVLLTGATGFLGRYLVLELLRRLDVDGRLICLVRAESDEDARRRLEKTFDSGDPELLRHFKELAADRLEVVAGDKSEPDLGLDQPMWRRLAETVDLIVDSAAMVNAFPYHELFGPNVAGTAELIRIALTTKLKPFTYVSTADVGAAIEPSAFTEDADIRVISPTRTVDGGWAGGYGTSKWAGEVLLREANDLCALPVAVFRCGMILADTSYAGQLNMSDWVTRMVLSLMATGIAPRSFYEPDSEGNRQRAHFDGLPVTFVAEAIAVLGARVAGSSLAGFATYHVMNPHDDGIGLDEYVDWLIEAGYPIRRIDDFAEWLQRFEASLGALPDRQRRHSVLPMLLASNSQRLQPLKPTRGCSAPTDRFRAAVRAAKVGSDKDNPDIPHVSAPTIINYVTNLQLLGLL.

2 consecutive Carrier domains span residues 935–1003 (AAGL…PTPD) and 1984–2059 (APAG…GRDA). Residues Ser963 and Ser2019 each carry the O-(pantetheine 4'-phosphoryl)serine modification. The Thioester reductase (TE) domain maps to 2112–2372 (LTGATGFLGR…LPVTFVAEAI (261 aa)).

This sequence belongs to the ATP-dependent AMP-binding enzyme family. Pantetheine 4'-phosphate is required as a cofactor.

The enzyme catalyses 2 a (3R)-3-isocyanyl-fatty acyl-[ACP] + L-lysine + ATP + 2 NADPH = an isonitrile lipopeptide + 2 holo-[ACP] + AMP + diphosphate + 2 NADP(+). Nonribosomal peptide synthetase (NRPS) involved in the biosynthesis of a unique class of isonitrile lipopeptides (INLPs) that seem to function as virulence factors in M.tuberculosis and to play a role in metal acquisition. Catalyzes the final step in the pathway, i.e. the condensation of a (3R)-3-isocyanyl-fatty acyl-[ACP] to both amino groups of a lysine, producing isonitrile lipopeptides. This Mycobacterium tuberculosis (strain ATCC 25618 / H37Rv) protein is Isonitrile lipopeptide synthase.